The chain runs to 486 residues: Ribosomal RNA small subunit methyltransferase F (486 aa).

S-adenosyl-L-methionine contacts are provided by residues 124–130 (ASAPGSK), E148, D175, and D193. The active-site Nucleophile is the C246.

It belongs to the class I-like SAM-binding methyltransferase superfamily. RsmB/NOP family.

It is found in the cytoplasm. The enzyme catalyses cytidine(1407) in 16S rRNA + S-adenosyl-L-methionine = 5-methylcytidine(1407) in 16S rRNA + S-adenosyl-L-homocysteine + H(+). Specifically methylates the cytosine at position 1407 (m5C1407) of 16S rRNA. The polypeptide is Ribosomal RNA small subunit methyltransferase F (Shewanella baltica (strain OS155 / ATCC BAA-1091)).